The following is a 242-amino-acid chain: Zinc-finger homeodomain protein 13 (242 aa).

The segment at 64–111 (YYECRKNHAADIGTTAYDGCGEFVSSTGEEDSLNCAACGCHRNFHREE) adopts a ZF-HD dimerization-type; degenerate zinc-finger fold. Positions 144-166 (GGKSEGKKKKKEKESYGGDPIIK) are disordered. Residues 155-166 (EKESYGGDPIIK) show a composition bias toward basic and acidic residues. The segment at residues 179–238 (VKRLKTKFTAEQTEKMRDYAEKLRWKVRPERQEEVEEFCVEIGVNRKNFRIWMNNHKDKI) is a DNA-binding region (homeobox).

In terms of assembly, homo- and heterodimer with other ZFHD proteins. Interacts with MIF1, MIF2 and MIF3; these interactions prevent nuclear localization and DNA-binding to inhibit transcription regulation activity. Binds to ZHD11. As to expression, mostly expressed in flowers.

It localises to the nucleus. In terms of biological role, putative transcription factor. The polypeptide is Zinc-finger homeodomain protein 13 (ZHD13) (Arabidopsis thaliana (Mouse-ear cress)).